A 132-amino-acid polypeptide reads, in one-letter code: MVMTDPVADFLTRIRNGNMVMHETVEVPGSRIKLSIARIMQEEGYIKDYEFVEDGKQGIIRIYLKYGPDKKKVITGIKRISKPGLRVYVKKDEIPRVLGGLGTAVISTSKGLMTDKNARKQGLGGEVICYIW.

The protein belongs to the universal ribosomal protein uS8 family. As to quaternary structure, part of the 30S ribosomal subunit. Contacts proteins S5 and S12.

Functionally, one of the primary rRNA binding proteins, it binds directly to 16S rRNA central domain where it helps coordinate assembly of the platform of the 30S subunit. This chain is Small ribosomal subunit protein uS8, found in Syntrophomonas wolfei subsp. wolfei (strain DSM 2245B / Goettingen).